Consider the following 302-residue polypeptide: MSLTIQDLILKLKLFWEKQGCAILQPLDMEVGAGTSHPMTCLRAIGPEPIFISYIQPSRRFSDGRYGKNPNRLQHYYQFQVIMKPSPINIQDIYLISLQEIGININNNDIKFIEDDWENDTLGAWGVGWEVWINGMEVTQFTYFQQMGGLNCFPITGEITYGIERIAMKLQNIDNVYDLIWSNNFFQKITYKEMFYQNEIQQSVYNFEHSNIEFLLFCFKQYEKEAIKLINLKNPLFIPAYEKLLKAIYNFNLLDARKAISLTAKKNYTIRLRSLTNEISKLYLNYRKSLGFPMCKNNESIS.

The protein belongs to the class-II aminoacyl-tRNA synthetase family. As to quaternary structure, tetramer of two alpha and two beta subunits.

The protein localises to the cytoplasm. The catalysed reaction is tRNA(Gly) + glycine + ATP = glycyl-tRNA(Gly) + AMP + diphosphate. The sequence is that of Glycine--tRNA ligase alpha subunit from Wigglesworthia glossinidia brevipalpis.